The chain runs to 264 residues: 3-methyl-2-oxobutanoate hydroxymethyltransferase (264 aa).

Residues Asp-45 and Asp-84 each contribute to the Mg(2+) site. 3-methyl-2-oxobutanoate is bound by residues 45 to 46 (DS), Asp-84, and Lys-112. Residue Glu-114 participates in Mg(2+) binding. The Proton acceptor role is filled by Glu-181.

Belongs to the PanB family. Homodecamer; pentamer of dimers. The cofactor is Mg(2+).

It localises to the cytoplasm. It catalyses the reaction 3-methyl-2-oxobutanoate + (6R)-5,10-methylene-5,6,7,8-tetrahydrofolate + H2O = 2-dehydropantoate + (6S)-5,6,7,8-tetrahydrofolate. It participates in cofactor biosynthesis; (R)-pantothenate biosynthesis; (R)-pantoate from 3-methyl-2-oxobutanoate: step 1/2. Functionally, catalyzes the reversible reaction in which hydroxymethyl group from 5,10-methylenetetrahydrofolate is transferred onto alpha-ketoisovalerate to form ketopantoate. The protein is 3-methyl-2-oxobutanoate hydroxymethyltransferase of Vibrio vulnificus (strain YJ016).